Reading from the N-terminus, the 159-residue chain is Transcriptional repressor NrdR (159 aa).

A zinc finger spans residues 3 to 34; that stretch reads CPFCRHDDTQVVDSRVSEDGAAIRRRRRCSAC. The 91-residue stretch at 49–139 folds into the ATP-cone domain; that stretch reads PFVVKKDGSR…VYRRFEDVSE (91 aa).

This sequence belongs to the NrdR family. Zn(2+) is required as a cofactor.

In terms of biological role, negatively regulates transcription of bacterial ribonucleotide reductase nrd genes and operons by binding to NrdR-boxes. This is Transcriptional repressor NrdR from Burkholderia cenocepacia (strain ATCC BAA-245 / DSM 16553 / LMG 16656 / NCTC 13227 / J2315 / CF5610) (Burkholderia cepacia (strain J2315)).